We begin with the raw amino-acid sequence, 203 residues long: Ras-related protein Rab-7a (203 aa).

Residues 15 to 22 (GDSGVGKT), 34 to 40 (SNQYKAT), 63 to 67 (DTAGQ), 125 to 128 (NKID), and 157 to 158 (AK) contribute to the GTP site. An Effector region motif is present at residues 37–45 (YKATIGADF). Residues C202 and C203 are each lipidated (S-geranylgeranyl cysteine).

The protein belongs to the small GTPase superfamily. Rab family.

The protein resides in the late endosome membrane. It localises to the lysosome membrane. It is found in the cytoplasmic vesicle. Its subcellular location is the autophagosome membrane. The protein localises to the lipid droplet. The catalysed reaction is GTP + H2O = GDP + phosphate + H(+). Small GTPase which cycles between active GTP-bound and inactive GDP-bound states. In its active state, binds to a variety of effector proteins playing a key role in the regulation of endo-lysosomal trafficking. Governs early-to-late endosomal maturation, microtubule minus-end as well as plus-end directed endosomal migration and positioning, and endosome-lysosome transport through different protein-protein interaction cascades. Involved in lipophagy, a cytosolic lipase-independent autophagic pathway. The protein is Ras-related protein Rab-7a (rab7A) of Dictyostelium discoideum (Social amoeba).